A 972-amino-acid chain; its full sequence is RNA polymerase-associated protein RapA (972 aa).

Residues 164–334 (EVGRRYAPRV…FARLRLLDPD (171 aa)) enclose the Helicase ATP-binding domain. 177–184 (DEVGLGKT) contacts ATP. Positions 280 to 283 (DEAH) match the DEAH box motif. The Helicase C-terminal domain maps to 493–671 (RVNWLLEMLK…HEPEALENLI (179 aa)).

This sequence belongs to the SNF2/RAD54 helicase family. RapA subfamily. As to quaternary structure, interacts with the RNAP. Has a higher affinity for the core RNAP than for the holoenzyme. Its ATPase activity is stimulated by binding to RNAP.

Its function is as follows. Transcription regulator that activates transcription by stimulating RNA polymerase (RNAP) recycling in case of stress conditions such as supercoiled DNA or high salt concentrations. Probably acts by releasing the RNAP, when it is trapped or immobilized on tightly supercoiled DNA. Does not activate transcription on linear DNA. Probably not involved in DNA repair. The polypeptide is RNA polymerase-associated protein RapA (Photobacterium profundum (strain SS9)).